Consider the following 91-residue polypeptide: Elongation factor 1-beta (91 aa).

Belongs to the EF-1-beta/EF-1-delta family.

Its function is as follows. Promotes the exchange of GDP for GTP in EF-1-alpha/GDP, thus allowing the regeneration of EF-1-alpha/GTP that could then be used to form the ternary complex EF-1-alpha/GTP/AAtRNA. This is Elongation factor 1-beta (ef1b) from Pyrococcus abyssi (strain GE5 / Orsay).